Reading from the N-terminus, the 451-residue chain is Chromosomal replication initiator protein DnaA (451 aa).

The interval 1-77 is domain I, interacts with DnaA modulators; that stretch reads MTENEQIFWN…EVYNAQISVD (77 aa). The segment at 77–110 is domain II; the sequence is DYVFEEDLMIEQNQTKINQKPKQQALNSLPTVTS. Residues 111–329 are domain III, AAA+ region; the sequence is DLNSKYSFEN…GALKDISLVA (219 aa). Residues G155, G157, K158, and T159 each contribute to the ATP site. Residues 330–451 form a domain IV, binds dsDNA region; the sequence is NFKQIDTITV…EIETIKNKIK (122 aa).

The protein belongs to the DnaA family. In terms of assembly, oligomerizes as a right-handed, spiral filament on DNA at oriC.

Its subcellular location is the cytoplasm. Functionally, plays an essential role in the initiation and regulation of chromosomal replication. ATP-DnaA binds to the origin of replication (oriC) to initiate formation of the DNA replication initiation complex once per cell cycle. Binds the DnaA box (a 9 base pair repeat at the origin) and separates the double-stranded (ds)DNA. Forms a right-handed helical filament on oriC DNA; dsDNA binds to the exterior of the filament while single-stranded (ss)DNA is stabiized in the filament's interior. The ATP-DnaA-oriC complex binds and stabilizes one strand of the AT-rich DNA unwinding element (DUE), permitting loading of DNA polymerase. After initiation quickly degrades to an ADP-DnaA complex that is not apt for DNA replication. Binds acidic phospholipids. In terms of biological role, the half-life of ATP-DnaA is 12 minutes at 37 degrees Celsius, in E.coli the half-life is about 41 minutes. This chain is Chromosomal replication initiator protein DnaA, found in Streptococcus pyogenes serotype M1.